Consider the following 168-residue polypeptide: 3-isopropylmalate dehydratase small subunit (168 aa).

Belongs to the LeuD family. LeuD type 2 subfamily. Heterodimer of LeuC and LeuD.

It catalyses the reaction (2R,3S)-3-isopropylmalate = (2S)-2-isopropylmalate. Its pathway is amino-acid biosynthesis; L-leucine biosynthesis; L-leucine from 3-methyl-2-oxobutanoate: step 2/4. Its function is as follows. Catalyzes the isomerization between 2-isopropylmalate and 3-isopropylmalate, via the formation of 2-isopropylmaleate. The polypeptide is 3-isopropylmalate dehydratase small subunit (leuD) (Aquifex aeolicus (strain VF5)).